The primary structure comprises 207 residues: Dephospho-CoA kinase (207 aa).

The DPCK domain maps to 10-207 (ILGLTGGIGS…FYLTLKGGQP (198 aa)). Position 18–23 (18–23 (GSGKSA)) interacts with ATP.

The protein belongs to the CoaE family.

It is found in the cytoplasm. It carries out the reaction 3'-dephospho-CoA + ATP = ADP + CoA + H(+). The protein operates within cofactor biosynthesis; coenzyme A biosynthesis; CoA from (R)-pantothenate: step 5/5. Its function is as follows. Catalyzes the phosphorylation of the 3'-hydroxyl group of dephosphocoenzyme A to form coenzyme A. This Pseudomonas putida (strain ATCC 47054 / DSM 6125 / CFBP 8728 / NCIMB 11950 / KT2440) protein is Dephospho-CoA kinase.